The sequence spans 122 residues: Large ribosomal subunit protein uL14 (122 aa).

It belongs to the universal ribosomal protein uL14 family. In terms of assembly, part of the 50S ribosomal subunit. Forms a cluster with proteins L3 and L19. In the 70S ribosome, L14 and L19 interact and together make contacts with the 16S rRNA in bridges B5 and B8.

Its function is as follows. Binds to 23S rRNA. Forms part of two intersubunit bridges in the 70S ribosome. The polypeptide is Large ribosomal subunit protein uL14 (Francisella tularensis subsp. holarctica (strain LVS)).